Here is a 180-residue protein sequence, read N- to C-terminus: Large ribosomal subunit protein uL5 (180 aa).

Belongs to the universal ribosomal protein uL5 family. Part of the 50S ribosomal subunit; part of the 5S rRNA/L5/L18/L25 subcomplex. Contacts the 5S rRNA and the P site tRNA. Forms a bridge to the 30S subunit in the 70S ribosome.

This is one of the proteins that bind and probably mediate the attachment of the 5S RNA into the large ribosomal subunit, where it forms part of the central protuberance. In the 70S ribosome it contacts protein S13 of the 30S subunit (bridge B1b), connecting the 2 subunits; this bridge is implicated in subunit movement. Contacts the P site tRNA; the 5S rRNA and some of its associated proteins might help stabilize positioning of ribosome-bound tRNAs. This is Large ribosomal subunit protein uL5 from Streptococcus uberis (strain ATCC BAA-854 / 0140J).